The chain runs to 226 residues: Adenylate kinase (226 aa).

G11–T16 contributes to the ATP binding site. The NMP stretch occupies residues S31–V64. AMP contacts are provided by residues N62–V64, G90–R93, and Q97. The interval G127–D164 is LID. Residues R128 and T137–Y138 each bind ATP. AMP-binding residues include R161 and R172. Q205 lines the ATP pocket.

It belongs to the adenylate kinase family. As to quaternary structure, monomer.

Its subcellular location is the cytoplasm. It carries out the reaction AMP + ATP = 2 ADP. Its pathway is purine metabolism; AMP biosynthesis via salvage pathway; AMP from ADP: step 1/1. Functionally, catalyzes the reversible transfer of the terminal phosphate group between ATP and AMP. Plays an important role in cellular energy homeostasis and in adenine nucleotide metabolism. This chain is Adenylate kinase, found in Blochmanniella floridana.